A 308-amino-acid chain; its full sequence is Tetraacyldisaccharide 4'-kinase (308 aa).

Position 63–70 (63–70 (SFGGNGKT)) interacts with ATP.

Belongs to the LpxK family.

The catalysed reaction is a lipid A disaccharide + ATP = a lipid IVA + ADP + H(+). It participates in glycolipid biosynthesis; lipid IV(A) biosynthesis; lipid IV(A) from (3R)-3-hydroxytetradecanoyl-[acyl-carrier-protein] and UDP-N-acetyl-alpha-D-glucosamine: step 6/6. Transfers the gamma-phosphate of ATP to the 4'-position of a tetraacyldisaccharide 1-phosphate intermediate (termed DS-1-P) to form tetraacyldisaccharide 1,4'-bis-phosphate (lipid IVA). In Campylobacter jejuni subsp. jejuni serotype O:23/36 (strain 81-176), this protein is Tetraacyldisaccharide 4'-kinase.